We begin with the raw amino-acid sequence, 421 residues long: UDP-N-acetylglucosamine 1-carboxyvinyltransferase (421 aa).

26-27 (KN) contacts phosphoenolpyruvate. A UDP-N-acetyl-alpha-D-glucosamine-binding site is contributed by Arg-96. Asp-120 (proton donor) is an active-site residue. Residues Asp-308 and Val-330 each coordinate UDP-N-acetyl-alpha-D-glucosamine.

This sequence belongs to the EPSP synthase family. MurA subfamily.

It is found in the cytoplasm. It catalyses the reaction phosphoenolpyruvate + UDP-N-acetyl-alpha-D-glucosamine = UDP-N-acetyl-3-O-(1-carboxyvinyl)-alpha-D-glucosamine + phosphate. Its pathway is cell wall biogenesis; peptidoglycan biosynthesis. Functionally, cell wall formation. Adds enolpyruvyl to UDP-N-acetylglucosamine. In Corynebacterium efficiens (strain DSM 44549 / YS-314 / AJ 12310 / JCM 11189 / NBRC 100395), this protein is UDP-N-acetylglucosamine 1-carboxyvinyltransferase.